Consider the following 148-residue polypeptide: uncharacterized protein (148 aa).

A signal peptide spans 1–18; it reads MKIILTVLAGVGLLSAGG. A lipid anchor (N-palmitoyl cysteine) is attached at Cys19. A lipid anchor (S-diacylglycerol cysteine) is attached at Cys19.

The protein resides in the cell membrane. This is an uncharacterized protein from Bacillus subtilis (strain 168).